The primary structure comprises 460 residues: Cysteine--tRNA ligase (460 aa).

Cys29 lines the Zn(2+) pocket. A 'HIGH' region motif is present at residues Pro31–Asn41. Cys227, His252, and Glu256 together coordinate Zn(2+). The 'KMSKS' region signature appears at Lys285–Ser289. Lys288 is an ATP binding site.

It belongs to the class-I aminoacyl-tRNA synthetase family. As to quaternary structure, monomer. It depends on Zn(2+) as a cofactor.

The protein resides in the cytoplasm. The enzyme catalyses tRNA(Cys) + L-cysteine + ATP = L-cysteinyl-tRNA(Cys) + AMP + diphosphate. This chain is Cysteine--tRNA ligase, found in Bradyrhizobium diazoefficiens (strain JCM 10833 / BCRC 13528 / IAM 13628 / NBRC 14792 / USDA 110).